The following is an 836-amino-acid chain: V-type proton ATPase subunit C (836 aa).

The segment covering Leu-116–Gln-144 has biased composition (basic residues). 4 disordered regions span residues Leu-116–Pro-169, Ala-302–Ser-403, Lys-415–Asn-453, and Pro-496–Pro-544. Positions Ala-160–Pro-169 are enriched in pro residues. Positions Ala-302–Ser-316 are enriched in low complexity. 2 stretches are compositionally biased toward polar residues: residues Lys-319–Thr-348 and Thr-364–Ser-374. A compositionally biased stretch (low complexity) spans Ala-425 to Gln-450. Over residues Pro-496–His-511 the composition is skewed to polar residues. Positions Arg-512–Ser-529 are enriched in low complexity.

Belongs to the V-ATPase C subunit family. In terms of assembly, V-ATPase is a heteromultimeric enzyme made up of two complexes: the ATP-hydrolytic V1 complex and the proton translocation V0 complex. The V1 complex consists of three catalytic AB heterodimers that form a heterohexamer, three peripheral stalks each consisting of EG heterodimers, one central rotor including subunits D and F, and the regulatory subunits C and H. The proton translocation complex V0 consists of the proton transport subunit a, a ring of proteolipid subunits c9c'', rotary subunit d, subunits e and f, and the accessory subunits VhaAC45 and ATP6AP2. As to expression, in larvae, expressed in the ring gland, CNS, imaginal disks and lymph gland.

Subunit of the V1 complex of vacuolar(H+)-ATPase (V-ATPase), a multisubunit enzyme composed of a peripheral complex (V1) that hydrolyzes ATP and a membrane integral complex (V0) that translocates protons. V-ATPase is responsible for acidifying and maintaining the pH of intracellular compartments and in some cell types, is targeted to the plasma membrane, where it is responsible for acidifying the extracellular environment. Subunit C is necessary for the assembly of the catalytic sector of the enzyme and is likely to have a specific function in its catalytic activity. In enterocytes, acts as part of a pHCl-2 sensory pathway which mediates Tor-dependent larval growth and metabolism in response to zinc availability. Likely acts in maintaining enterocyte lysosomal acidification which consequently promotes Tor activation at the lysosome membrane. The protein is V-type proton ATPase subunit C (Vha44) of Drosophila melanogaster (Fruit fly).